The primary structure comprises 59 residues: UPF0434 protein COSY_0767 (59 aa).

It belongs to the UPF0434 family.

In Vesicomyosocius okutanii subsp. Calyptogena okutanii (strain HA), this protein is UPF0434 protein COSY_0767.